The sequence spans 499 residues: Importin subunit alpha-8 (499 aa).

One can recognise an IBB domain in the interval M1–M57. ARM repeat units follow at residues T101–S141, S144–G183, A186–R226, D229–K268, K271–A310, D313–A352, P354–T393, and Q397–Q436.

Belongs to the importin alpha family. Binds to importin subunit beta-1/KPNB1 via the IBB domain; this complex dissociates in the presence of RAN-GTP. Shows a limited binding to the RB1 nuclear localization signal (NLS), but not to the SV40, nor NPM1 NLSs. Interacts with RSL1D1. In terms of tissue distribution, expressed predominantly in ovary. Isoform 1 is the predominant form.

Its subcellular location is the nucleus. Functionally, functions in nuclear protein import. The polypeptide is Importin subunit alpha-8 (Kpna7) (Mus musculus (Mouse)).